The primary structure comprises 318 residues: Acetyl-coenzyme A carboxylase carboxyl transferase subunit alpha (318 aa).

The 255-residue stretch at 41–295 folds into the CoA carboxyltransferase C-terminal domain; the sequence is RLTTKSQELT…KRQLIADLGS (255 aa).

The protein belongs to the AccA family. In terms of assembly, acetyl-CoA carboxylase is a heterohexamer composed of biotin carboxyl carrier protein (AccB), biotin carboxylase (AccC) and two subunits each of ACCase subunit alpha (AccA) and ACCase subunit beta (AccD).

The protein localises to the cytoplasm. It carries out the reaction N(6)-carboxybiotinyl-L-lysyl-[protein] + acetyl-CoA = N(6)-biotinyl-L-lysyl-[protein] + malonyl-CoA. Its pathway is lipid metabolism; malonyl-CoA biosynthesis; malonyl-CoA from acetyl-CoA: step 1/1. Its function is as follows. Component of the acetyl coenzyme A carboxylase (ACC) complex. First, biotin carboxylase catalyzes the carboxylation of biotin on its carrier protein (BCCP) and then the CO(2) group is transferred by the carboxyltransferase to acetyl-CoA to form malonyl-CoA. The protein is Acetyl-coenzyme A carboxylase carboxyl transferase subunit alpha of Idiomarina loihiensis (strain ATCC BAA-735 / DSM 15497 / L2-TR).